A 381-amino-acid polypeptide reads, in one-letter code: EPS I polysaccharide export outer membrane protein EpsA (381 aa).

The signal sequence occupies residues 1–23; the sequence is MFVSIPNIRKAVVSLSVVPLLAA. The N-palmitoyl cysteine moiety is linked to residue Cys-24. Cys-24 carries the S-diacylglycerol cysteine lipid modification.

The protein belongs to the BexD/CtrA/VexA family.

Its subcellular location is the cell outer membrane. Its function is as follows. Probably involved in polymerization and/or export of exopolysaccharide EPS I which functions as a virulence factor. This chain is EPS I polysaccharide export outer membrane protein EpsA (epsA), found in Ralstonia nicotianae (strain ATCC BAA-1114 / GMI1000) (Ralstonia solanacearum).